A 167-amino-acid polypeptide reads, in one-letter code: Bacterial non-heme ferritin (167 aa).

The Ferritin-like diiron domain occupies 1 to 145 (MLSKDIIKLL…DILDKIELIG (145 aa)). Fe cation-binding residues include E17, E50, H53, E94, and Q127.

Belongs to the ferritin family. Prokaryotic subfamily. In terms of assembly, homooligomer of 24 subunits that assemble into a spherical protein shell (12 +/- 1 nM diameter) that can sequester at least 2000 iron atoms.

The protein localises to the cytoplasm. The enzyme catalyses 4 Fe(2+) + O2 + 6 H2O = 4 iron(III) oxide-hydroxide + 12 H(+). In terms of biological role, iron-storage protein. This is Bacterial non-heme ferritin (ftnA) from Helicobacter pylori (strain J99 / ATCC 700824) (Campylobacter pylori J99).